Consider the following 308-residue polypeptide: Putative protein TIC 214 N-terminal part (308 aa).

A run of 6 helical transmembrane segments spans residues 18 to 38 (IINSVVVVGFYYGFLTTFSIG), 64 to 84 (FITGQLMMFISIYYAPLHLAL), 87 to 107 (PHTITVLVLPHLLFHFFWNNH), 124 to 144 (LSIQCVFLNNLIFQLFNHFIL), 172 to 192 (VGWLIGHILFMKWVGLVLSWI), and 215 to 235 (IFSILLFITSVYYLGRMPSPI). Positions 239-249 (KLKETSEMEER) are enriched in basic and acidic residues. Positions 239-308 (KLKETSEMEE…RDPSEWKGNI (70 aa)) are disordered. A compositionally biased stretch (acidic residues) spans 250-262 (GESEEETDVEIET). Residues 264-273 (SETKETKQEQ) are compositionally biased toward basic and acidic residues. Residues 275-293 (GSTEEDPSLCSEEQEDPDK) show a composition bias toward acidic residues. Positions 294-308 (LDETGRDPSEWKGNI) are enriched in basic and acidic residues.

Belongs to the TIC214 family. As to quaternary structure, part of the Tic complex.

The protein resides in the plastid. The protein localises to the chloroplast inner membrane. Functionally, involved in protein precursor import into chloroplasts. May be part of an intermediate translocation complex acting as a protein-conducting channel at the inner envelope. This Piper cenocladum (Ant piper) protein is Putative protein TIC 214 N-terminal part.